A 785-amino-acid chain; its full sequence is Phenylalanine--tRNA ligase beta subunit (785 aa).

The region spanning 39–148 (APAFSGVVIA…ADAPVGQSIR (110 aa)) is the tRNA-binding domain. The 76-residue stretch at 399 to 474 (PKRQAVQLRA…RVYGYNNIPA (76 aa)) folds into the B5 domain. Mg(2+)-binding residues include D452, D458, E461, and E462. Positions 692-784 (SKFQPVRRDL…AASELGAQLR (93 aa)) constitute an FDX-ACB domain.

Belongs to the phenylalanyl-tRNA synthetase beta subunit family. Type 1 subfamily. In terms of assembly, tetramer of two alpha and two beta subunits. Mg(2+) is required as a cofactor.

It localises to the cytoplasm. The enzyme catalyses tRNA(Phe) + L-phenylalanine + ATP = L-phenylalanyl-tRNA(Phe) + AMP + diphosphate + H(+). The chain is Phenylalanine--tRNA ligase beta subunit from Chromobacterium violaceum (strain ATCC 12472 / DSM 30191 / JCM 1249 / CCUG 213 / NBRC 12614 / NCIMB 9131 / NCTC 9757 / MK).